A 182-amino-acid polypeptide reads, in one-letter code: MAARLRTKYKKEIVPELNKKFKFSSIMQVPRLEKIVLNVGMGEAHTNPKALEAAVEELALITGQRPVKTKAKKSIAGFKIREGMSLGCMVTLRGDYMYEFLDRLVNVALPRVRDFKGVSEKGFDGRGNYNMSIKEQIIFPEIKVDKINTLYGINMTFVTNSKSNEEAYSLLAAFGMPYRNQK.

Belongs to the universal ribosomal protein uL5 family. As to quaternary structure, part of the 50S ribosomal subunit; part of the 5S rRNA/L5/L18/L25 subcomplex. Contacts the 5S rRNA and the P site tRNA. Forms a bridge to the 30S subunit in the 70S ribosome.

This is one of the proteins that bind and probably mediate the attachment of the 5S RNA into the large ribosomal subunit, where it forms part of the central protuberance. In the 70S ribosome it contacts protein S13 of the 30S subunit (bridge B1b), connecting the 2 subunits; this bridge is implicated in subunit movement. Contacts the P site tRNA; the 5S rRNA and some of its associated proteins might help stabilize positioning of ribosome-bound tRNAs. The chain is Large ribosomal subunit protein uL5 from Leptospira interrogans serogroup Icterohaemorrhagiae serovar copenhageni (strain Fiocruz L1-130).